Here is a 307-residue protein sequence, read N- to C-terminus: Coproporphyrin III ferrochelatase (307 aa).

Residues tyrosine 12, arginine 29, 45-46 (RY), serine 53, and tyrosine 124 contribute to the Fe-coproporphyrin III site. Residues histidine 181 and glutamate 263 each coordinate Fe(2+).

This sequence belongs to the ferrochelatase family.

Its subcellular location is the cytoplasm. The catalysed reaction is Fe-coproporphyrin III + 2 H(+) = coproporphyrin III + Fe(2+). The protein operates within porphyrin-containing compound metabolism; protoheme biosynthesis. Functionally, involved in coproporphyrin-dependent heme b biosynthesis. Catalyzes the insertion of ferrous iron into coproporphyrin III to form Fe-coproporphyrin III. It can also insert iron into protoporphyrin IX, but it has a much stronger preference for coproprophyrin III as the substrate. The sequence is that of Coproporphyrin III ferrochelatase from Staphylococcus aureus (strain NCTC 8325 / PS 47).